The primary structure comprises 266 residues: Small ribosomal subunit protein uS2 (266 aa).

The interval 247-266 (EGENNYSNNRSWNKPERTNN) is disordered. Polar residues predominate over residues 249-258 (ENNYSNNRSW).

The protein belongs to the universal ribosomal protein uS2 family.

This chain is Small ribosomal subunit protein uS2, found in Mesoplasma florum (strain ATCC 33453 / NBRC 100688 / NCTC 11704 / L1) (Acholeplasma florum).